Reading from the N-terminus, the 304-residue chain is Choline-phosphate cytidylyltransferase 2 (304 aa).

CTP contacts are provided by residues 28–36 and K66; that span reads IFDLFHFGH. Substrate is bound by residues K66 and W95. Residues 112–113, Y117, and 142–146 each bind CTP; these read HD and RTEGI. Positions 266–292 are disordered; sequence QNGLTISKDNDDEQMSDDNEFAEEDCV. Residues 275–291 are compositionally biased toward acidic residues; that stretch reads NDDEQMSDDNEFAEEDC.

Belongs to the cytidylyltransferase family.

The catalysed reaction is phosphocholine + CTP + H(+) = CDP-choline + diphosphate. It functions in the pathway phospholipid metabolism; phosphatidylcholine biosynthesis; phosphatidylcholine from phosphocholine: step 1/2. Functionally, plays an important role in the biosynthesis of the phospholipid phosphatidylcholine. Catalyzes the formation of CDP-choline. The sequence is that of Choline-phosphate cytidylyltransferase 2 from Arabidopsis thaliana (Mouse-ear cress).